The sequence spans 319 residues: Olfactory receptor 2S2 (319 aa).

At 1 to 26 the chain is on the extracellular side; the sequence is MEKANETSPVMGFVLLRLSAHPELEK. Asn5 carries N-linked (GlcNAc...) asparagine glycosylation. Residues 27–50 form a helical membrane-spanning segment; the sequence is TFFVLILLMYLVILLGNGVLILVT. At 51–58 the chain is on the cytoplasmic side; sequence ILDSRLHT. A helical transmembrane segment spans residues 59-80; the sequence is PMYFFLGNLSFLDICFTTSSVP. The Extracellular portion of the chain corresponds to 81–101; it reads LVLDSFLTPQETISFSACAVQ. A disulfide bridge connects residues Cys98 and Cys190. Residues 102 to 121 form a helical membrane-spanning segment; that stretch reads MALSFAMAGTECLLLSMMAF. The Cytoplasmic segment spans residues 122 to 140; sequence DRYVAICNPLRYSVIMSKA. A helical transmembrane segment spans residues 141-159; the sequence is AYMPMAASSWAIGGAASVV. The Extracellular segment spans residues 160–196; sequence HTSLAIQLPFCGDNVINHFTCEILAVLKLACADISIN. Residues 197 to 220 form a helical membrane-spanning segment; that stretch reads VISMEVTNVIFLGVPVLFISFSYV. The Cytoplasmic segment spans residues 221-237; that stretch reads FIITTILRIPSAEGRKK. Residues 238-260 traverse the membrane as a helical segment; sequence VFSTCSAHLTVVIVFYGTLFFMY. The Extracellular segment spans residues 261-279; that stretch reads GKPKSKDSMGADKEDLSDK. A helical membrane pass occupies residues 280 to 299; sequence LIPLFYGVVTPMLNPIIYSL. At 300-319 the chain is on the cytoplasmic side; it reads RNKDVKAAVRRLLRPKGFTQ.

The protein belongs to the G-protein coupled receptor 1 family.

It is found in the cell membrane. Odorant receptor. This Homo sapiens (Human) protein is Olfactory receptor 2S2 (OR2S2).